Here is a 61-residue protein sequence, read N- to C-terminus: uncharacterized protein (61 aa).

This is an uncharacterized protein from Rickettsia conorii (strain ATCC VR-613 / Malish 7).